Consider the following 197-residue polypeptide: Holliday junction branch migration complex subunit RuvA (197 aa).

A domain I region spans residues 1 to 65 (MISQVRGTIM…EDAWHLYGFA (65 aa)). The segment at 66-140 (HAYERAVFQK…DKIDAVGPAP (75 aa)) is domain II. A flexible linker region spans residues 140–144 (PATGT). Residues 145–197 (APSPLGDDAVRALIALGYNQTEADRAVRAVVESGAPKDVSSLVRGALSRLTAK) form a domain III region.

It belongs to the RuvA family. As to quaternary structure, homotetramer. Forms an RuvA(8)-RuvB(12)-Holliday junction (HJ) complex. HJ DNA is sandwiched between 2 RuvA tetramers; dsDNA enters through RuvA and exits via RuvB. An RuvB hexamer assembles on each DNA strand where it exits the tetramer. Each RuvB hexamer is contacted by two RuvA subunits (via domain III) on 2 adjacent RuvB subunits; this complex drives branch migration. In the full resolvosome a probable DNA-RuvA(4)-RuvB(12)-RuvC(2) complex forms which resolves the HJ.

It is found in the cytoplasm. In terms of biological role, the RuvA-RuvB-RuvC complex processes Holliday junction (HJ) DNA during genetic recombination and DNA repair, while the RuvA-RuvB complex plays an important role in the rescue of blocked DNA replication forks via replication fork reversal (RFR). RuvA specifically binds to HJ cruciform DNA, conferring on it an open structure. The RuvB hexamer acts as an ATP-dependent pump, pulling dsDNA into and through the RuvAB complex. HJ branch migration allows RuvC to scan DNA until it finds its consensus sequence, where it cleaves and resolves the cruciform DNA. The chain is Holliday junction branch migration complex subunit RuvA from Gemmatimonas aurantiaca (strain DSM 14586 / JCM 11422 / NBRC 100505 / T-27).